Reading from the N-terminus, the 419-residue chain is MLYYLFDYLEKLQLPGARLFHYVSFRSAVAIILALLLATVIGNRIIERLRKAQIGETIRDLGLEGQLSKKGTPTMGGLIIIISILIPTLLLARLDNVYILLMIVTTLLLGSLGFLDDYIKVFRKKKEGLHGRYKIIGQVGLGFIIGIVLYMNPAVVIKENSEVLRDGQVERVHFNKQEVKSTKTTIPFVKNNNFDYADILPFEGKTKVLFGWILFVCVAVVVVTFISNCANLTDGLDGLATGSSAIIGVVLAIFAYVSSHIEMASYLNIMFIPGAEELTIFAFAFVGATIGFLWYNAYPAQVFMGDTGSLTLGGIIAVFALIIRKEMLLPILCFVFIIEGLSVMIQVFYFKLTKRRTGEGRRIFKMTPLHHHFQKPGNAGIDAWLQKPMQAIPESKITVRFWLVGIIMAAITIATLKMR.

10 helical membrane-spanning segments follow: residues 22-42 (YVSFRSAVAIILALLLATVIG), 72-92 (TPTMGGLIIIISILIPTLLLA), 99-119 (ILLMIVTTLLLGSLGFLDDYI), 135-155 (IIGQVGLGFIIGIVLYMNPAV), 208-228 (VLFGWILFVCVAVVVVTFISN), 238-258 (GLATGSSAIIGVVLAIFAYVS), 278-298 (LTIFAFAFVGATIGFLWYNAY), 303-323 (FMGDTGSLTLGGIIAVFALII), 328-348 (LLPILCFVFIIEGLSVMIQVF), and 396-416 (KITVRFWLVGIIMAAITIATL).

The protein belongs to the glycosyltransferase 4 family. MraY subfamily. Mg(2+) is required as a cofactor.

It is found in the cell inner membrane. It catalyses the reaction UDP-N-acetyl-alpha-D-muramoyl-L-alanyl-gamma-D-glutamyl-meso-2,6-diaminopimeloyl-D-alanyl-D-alanine + di-trans,octa-cis-undecaprenyl phosphate = di-trans,octa-cis-undecaprenyl diphospho-N-acetyl-alpha-D-muramoyl-L-alanyl-D-glutamyl-meso-2,6-diaminopimeloyl-D-alanyl-D-alanine + UMP. The protein operates within cell wall biogenesis; peptidoglycan biosynthesis. Catalyzes the initial step of the lipid cycle reactions in the biosynthesis of the cell wall peptidoglycan: transfers peptidoglycan precursor phospho-MurNAc-pentapeptide from UDP-MurNAc-pentapeptide onto the lipid carrier undecaprenyl phosphate, yielding undecaprenyl-pyrophosphoryl-MurNAc-pentapeptide, known as lipid I. This is Phospho-N-acetylmuramoyl-pentapeptide-transferase from Porphyromonas gingivalis (strain ATCC 33277 / DSM 20709 / CIP 103683 / JCM 12257 / NCTC 11834 / 2561).